Here is a 174-residue protein sequence, read N- to C-terminus: UPF0316 protein LMOf2365_1801 (174 aa).

3 consecutive transmembrane segments (helical) span residues 4 to 24 (GIFI…IYTV), 36 to 56 (LAAL…SLVL), and 62 to 82 (IANV…GMKI).

The protein belongs to the UPF0316 family.

The protein resides in the cell membrane. The chain is UPF0316 protein LMOf2365_1801 from Listeria monocytogenes serotype 4b (strain F2365).